The chain runs to 567 residues: Adenine deaminase 2 (567 aa).

This sequence belongs to the metallo-dependent hydrolases superfamily. Adenine deaminase family. The cofactor is Mn(2+).

It catalyses the reaction adenine + H2O + H(+) = hypoxanthine + NH4(+). The protein is Adenine deaminase 2 of Oenococcus oeni (strain ATCC BAA-331 / PSU-1).